The following is a 184-amino-acid chain: Probable maltose O-acetyltransferase (184 aa).

Acetyl-CoA is bound at residue asparagine 84. Histidine 114 functions as the Proton donor/acceptor in the catalytic mechanism. Residues glycine 141, serine 159, 164-165 (TK), arginine 179, and lysine 182 contribute to the acetyl-CoA site.

The protein belongs to the transferase hexapeptide repeat family. In terms of assembly, homodimer.

It catalyses the reaction D-maltose + acetyl-CoA = 1-O-acetylmaltose + CoA. Its function is as follows. Catalyzes the CoA-dependent transfer of an acetyl group to maltose and other sugars. Acetylates glucose exclusively at the C6 position and maltose at the C6 position of the non-reducing end glucosyl moiety. Is able to acetylate maltooligosaccharides. This Bacillus subtilis (strain 168) protein is Probable maltose O-acetyltransferase (maa).